Consider the following 491-residue polypeptide: Glutamyl-tRNA(Gln) amidotransferase subunit A (491 aa).

Residues Lys77 and Ser152 each act as charge relay system in the active site. Ser176 functions as the Acyl-ester intermediate in the catalytic mechanism.

Belongs to the amidase family. GatA subfamily. In terms of assembly, heterotrimer of A, B and C subunits.

The catalysed reaction is L-glutamyl-tRNA(Gln) + L-glutamine + ATP + H2O = L-glutaminyl-tRNA(Gln) + L-glutamate + ADP + phosphate + H(+). In terms of biological role, allows the formation of correctly charged Gln-tRNA(Gln) through the transamidation of misacylated Glu-tRNA(Gln) in organisms which lack glutaminyl-tRNA synthetase. The reaction takes place in the presence of glutamine and ATP through an activated gamma-phospho-Glu-tRNA(Gln). The chain is Glutamyl-tRNA(Gln) amidotransferase subunit A from Chlamydia abortus (strain DSM 27085 / S26/3) (Chlamydophila abortus).